Here is a 167-residue protein sequence, read N- to C-terminus: Small ribosomal subunit protein uS5 (167 aa).

The S5 DRBM domain maps to 11-74 (LQEKLIAVNR…EKARRNMINV (64 aa)).

This sequence belongs to the universal ribosomal protein uS5 family. In terms of assembly, part of the 30S ribosomal subunit. Contacts proteins S4 and S8.

Functionally, with S4 and S12 plays an important role in translational accuracy. In terms of biological role, located at the back of the 30S subunit body where it stabilizes the conformation of the head with respect to the body. The sequence is that of Small ribosomal subunit protein uS5 from Shigella dysenteriae serotype 1 (strain Sd197).